Here is a 92-residue protein sequence, read N- to C-terminus: MFSHTKKVGPTGRFGPRYGLKIRVRVRDVEIKAKKKYKCPVCGFPKLKRASTSIWVCGKCGAKIAGGAYTPETGAGKAVMKAIRRIVERKEE.

Zn(2+) contacts are provided by Cys39, Cys42, Cys57, and Cys60. Residues Cys39–Cys60 form a C4-type zinc finger.

This sequence belongs to the eukaryotic ribosomal protein eL43 family. Putative zinc-binding subfamily. Part of the 50S ribosomal subunit. Zn(2+) serves as cofactor.

Binds to the 23S rRNA. This chain is Large ribosomal subunit protein eL43, found in Methanocaldococcus jannaschii (strain ATCC 43067 / DSM 2661 / JAL-1 / JCM 10045 / NBRC 100440) (Methanococcus jannaschii).